We begin with the raw amino-acid sequence, 77 residues long: ATP synthase subunit c (77 aa).

A run of 2 helical transmembrane segments spans residues 13–33 and 55–75; these read IATVGYGLAAIGPGIGVGIVA and FLGIAFSEALALIGLATYFIF.

The protein belongs to the ATPase C chain family. As to quaternary structure, F-type ATPases have 2 components, F(1) - the catalytic core - and F(0) - the membrane proton channel. F(1) has five subunits: alpha(3), beta(3), gamma(1), delta(1), epsilon(1). F(0) has three main subunits: a(1), b(2) and c(10-14). The alpha and beta chains form an alternating ring which encloses part of the gamma chain. F(1) is attached to F(0) by a central stalk formed by the gamma and epsilon chains, while a peripheral stalk is formed by the delta and b chains.

It is found in the cell membrane. F(1)F(0) ATP synthase produces ATP from ADP in the presence of a proton or sodium gradient. F-type ATPases consist of two structural domains, F(1) containing the extramembraneous catalytic core and F(0) containing the membrane proton channel, linked together by a central stalk and a peripheral stalk. During catalysis, ATP synthesis in the catalytic domain of F(1) is coupled via a rotary mechanism of the central stalk subunits to proton translocation. In terms of biological role, key component of the F(0) channel; it plays a direct role in translocation across the membrane. A homomeric c-ring of between 10-14 subunits forms the central stalk rotor element with the F(1) delta and epsilon subunits. The chain is ATP synthase subunit c from Clavibacter michiganensis subsp. michiganensis (strain NCPPB 382).